Here is a 181-residue protein sequence, read N- to C-terminus: Lysozyme C (181 aa).

The N-terminal stretch at 1 to 19 (MRIAFFLLILSIIVGLAYG) is a signal peptide. A propeptide spanning residues 139 to 181 (LTDSRPLGPFNVTEEEMDQLFIDHEIAMAQCEAEKTCNGFDLE) is cleaved from the precursor.

This sequence belongs to the dictyostelium lysozyme family. Post-translationally, contains six disulfide bonds.

The protein localises to the cytoplasmic vesicle lumen. It catalyses the reaction Hydrolysis of (1-&gt;4)-beta-linkages between N-acetylmuramic acid and N-acetyl-D-glucosamine residues in a peptidoglycan and between N-acetyl-D-glucosamine residues in chitodextrins.. Its function is as follows. Has antibacterial activity. The chain is Lysozyme C (alyC) from Dictyostelium discoideum (Social amoeba).